The primary structure comprises 94 residues: ESAT-6-like protein EsxI (94 aa).

Belongs to the WXG100 family. ESAT-6 subfamily.

It is found in the secreted. This is ESAT-6-like protein EsxI from Mycobacterium bovis (strain ATCC BAA-935 / AF2122/97).